The following is a 955-amino-acid chain: Protein translocase subunit SecA (955 aa).

ATP is bound by residues Q90, 108-112, and D509; that span reads GEGKT. Residues 537-571 are disordered; the sequence is EGHRPPVPLQRSGAEGGGGFAAKAAPASGPHGHAP. Low complexity predominate over residues 557 to 571; that stretch reads AAKAAPASGPHGHAP.

It belongs to the SecA family. As to quaternary structure, monomer and homodimer. Part of the essential Sec protein translocation apparatus which comprises SecA, SecYEG and auxiliary proteins SecDF. Other proteins may also be involved.

Its subcellular location is the cell inner membrane. The protein resides in the cellular thylakoid membrane. The protein localises to the cytoplasm. The enzyme catalyses ATP + H2O + cellular proteinSide 1 = ADP + phosphate + cellular proteinSide 2.. Functionally, part of the Sec protein translocase complex. Interacts with the SecYEG preprotein conducting channel. Has a central role in coupling the hydrolysis of ATP to the transfer of proteins into and across the cell membrane, serving as an ATP-driven molecular motor driving the stepwise translocation of polypeptide chains across the membrane. Probably participates in protein translocation into and across both the cytoplasmic and thylakoid membranes in cyanobacterial cells. The polypeptide is Protein translocase subunit SecA (Synechococcus sp. (strain WH7803)).